A 277-amino-acid chain; its full sequence is Phosphoenolpyruvate synthase regulatory protein (277 aa).

157 to 164 lines the ADP pocket; that stretch reads GVSRCGKT.

Belongs to the pyruvate, phosphate/water dikinase regulatory protein family. PSRP subfamily.

It catalyses the reaction [pyruvate, water dikinase] + ADP = [pyruvate, water dikinase]-phosphate + AMP + H(+). The enzyme catalyses [pyruvate, water dikinase]-phosphate + phosphate + H(+) = [pyruvate, water dikinase] + diphosphate. In terms of biological role, bifunctional serine/threonine kinase and phosphorylase involved in the regulation of the phosphoenolpyruvate synthase (PEPS) by catalyzing its phosphorylation/dephosphorylation. In Escherichia coli O6:K15:H31 (strain 536 / UPEC), this protein is Phosphoenolpyruvate synthase regulatory protein.